Reading from the N-terminus, the 545-residue chain is Membrane protein insertase YidC (545 aa).

The chain crosses the membrane as a helical span at residues 8 to 28 (ILLATVLSVGILILWQVIFPK). Residues 31–69 (PPKPAPTPAAEVAKPAAPAAPAPGAAAPAVPAPPPDAPE) are disordered. Residues 38–59 (PAAEVAKPAAPAAPAPGAAAPA) show a composition bias toward low complexity. 5 helical membrane passes run 325-345 (IDYG…LYVM), 355-375 (WGVA…PLTY), 421-441 (LGGC…YAAL), 458-478 (LTAH…SFVM), and 497-517 (FFPG…TLYI).

Belongs to the OXA1/ALB3/YidC family. Type 1 subfamily. As to quaternary structure, interacts with the Sec translocase complex via SecD. Specifically interacts with transmembrane segments of nascent integral membrane proteins during membrane integration.

The protein resides in the cell inner membrane. Functionally, required for the insertion and/or proper folding and/or complex formation of integral membrane proteins into the membrane. Involved in integration of membrane proteins that insert both dependently and independently of the Sec translocase complex, as well as at least some lipoproteins. Aids folding of multispanning membrane proteins. The protein is Membrane protein insertase YidC of Anaeromyxobacter dehalogenans (strain 2CP-C).